Reading from the N-terminus, the 430-residue chain is Enolase (430 aa).

Q163 contacts (2R)-2-phosphoglycerate. The Proton donor role is filled by E205. The Mg(2+) site is built by D242, E287, and D314. (2R)-2-phosphoglycerate is bound by residues K339, R368, S369, and K390. The active-site Proton acceptor is the K339.

Belongs to the enolase family. Mg(2+) serves as cofactor.

The protein resides in the cytoplasm. The protein localises to the secreted. It is found in the cell surface. The enzyme catalyses (2R)-2-phosphoglycerate = phosphoenolpyruvate + H2O. It functions in the pathway carbohydrate degradation; glycolysis; pyruvate from D-glyceraldehyde 3-phosphate: step 4/5. Its function is as follows. Catalyzes the reversible conversion of 2-phosphoglycerate (2-PG) into phosphoenolpyruvate (PEP). It is essential for the degradation of carbohydrates via glycolysis. The chain is Enolase from Bacillus licheniformis (strain ATCC 14580 / DSM 13 / JCM 2505 / CCUG 7422 / NBRC 12200 / NCIMB 9375 / NCTC 10341 / NRRL NRS-1264 / Gibson 46).